The sequence spans 577 residues: Chaperonin CPN60-1, mitochondrial (577 aa).

The N-terminal 34 residues, 1–34 (MYRAAASLASKARQAGNSLATRQVGSRLAWSRNY), are a transit peptide targeting the mitochondrion.

This sequence belongs to the chaperonin (HSP60) family.

Its subcellular location is the mitochondrion. Functionally, implicated in mitochondrial protein import and macromolecular assembly. May facilitate the correct folding of imported proteins. May also prevent misfolding and promote the refolding and proper assembly of unfolded polypeptides generated under stress conditions in the mitochondrial matrix. The sequence is that of Chaperonin CPN60-1, mitochondrial (CPN60I) from Zea mays (Maize).